Consider the following 398-residue polypeptide: Thyrotropin-releasing hormone receptor (398 aa).

Over 1-28 the chain is Extracellular; the sequence is MENETVSELNQTQLQPRAVVALEYQVVT. 2 N-linked (GlcNAc...) asparagine glycosylation sites follow: asparagine 3 and asparagine 10. Residues 29–51 form a helical membrane-spanning segment; sequence ILLVLIICGLGIVGNIMVVLVVM. Topologically, residues 52–61 are cytoplasmic; the sequence is RTKHMRTPTN. Residues 62 to 83 form a helical membrane-spanning segment; sequence CYLVSLAVADLMVLVAAGLPNI. Over 84-99 the chain is Extracellular; it reads TDSIYGSWVYGYVGCL. A disulfide bridge links cysteine 98 with cysteine 179. Residues 100 to 121 form a helical membrane-spanning segment; it reads CITYLQYLGINASSCSITAFTI. Topologically, residues 122 to 144 are cytoplasmic; the sequence is ERYIAICHPIKAQFLCTFSRAKK. The helical transmembrane segment at 145–168 threads the bilayer; the sequence is IIIFVWAFTSLYCMLWFFLLDLNI. Topologically, residues 169 to 193 are extracellular; sequence STYKDAIVISCGYKISRNYYSPIYL. The helical transmembrane segment at 194–215 threads the bilayer; that stretch reads MDFGVFYVVPMILATVLYGFIA. The Cytoplasmic segment spans residues 216-266; the sequence is RILFLNPIPSDPKENSKTWKNDSTHQNTNLNVNTSNRCFNSTVSSRKQVTK. A helical transmembrane segment spans residues 267-288; sequence MLAVVVILFALLWMPYRTLVVV. The Extracellular segment spans residues 289–296; it reads NSFLSSPF. The chain crosses the membrane as a helical span at residues 297–319; it reads QENWFLLFCRICIYLNSAINPVI. The Cytoplasmic portion of the chain corresponds to 320–398; sequence YNLMSQKFRA…LASEVSFSQS (79 aa).

This sequence belongs to the G-protein coupled receptor 1 family.

The protein localises to the cell membrane. Functionally, receptor for thyrotropin-releasing hormone (TRH). Upon ligand binding, this G-protein-coupled receptor triggers activation of the phosphatidylinositol (IP3)-calcium-protein kinase C (PKC) pathway. The sequence is that of Thyrotropin-releasing hormone receptor (TRHR) from Homo sapiens (Human).